Consider the following 283-residue polypeptide: Protein/nucleic acid deglycase HchA (283 aa).

Zn(2+) contacts are provided by His-86, Glu-91, and His-123. Cys-185 acts as the Nucleophile in catalysis.

It belongs to the peptidase C56 family. HchA subfamily. Homodimer.

The protein resides in the cytoplasm. It catalyses the reaction N(omega)-(1-hydroxy-2-oxopropyl)-L-arginyl-[protein] + H2O = lactate + L-arginyl-[protein] + H(+). The enzyme catalyses N(6)-(1-hydroxy-2-oxopropyl)-L-lysyl-[protein] + H2O = lactate + L-lysyl-[protein] + H(+). It carries out the reaction S-(1-hydroxy-2-oxopropyl)-L-cysteinyl-[protein] + H2O = lactate + L-cysteinyl-[protein] + H(+). The catalysed reaction is N(omega)-(1-hydroxy-2-oxoethyl)-L-arginyl-[protein] + H2O = L-arginyl-[protein] + glycolate + H(+). It catalyses the reaction N(6)-(1-hydroxy-2-oxoethyl)-L-lysyl-[protein] + H2O = glycolate + L-lysyl-[protein] + H(+). The enzyme catalyses S-(1-hydroxy-2-oxoethyl)-L-cysteinyl-[protein] + H2O = glycolate + L-cysteinyl-[protein] + H(+). It carries out the reaction N(2)-(1-hydroxy-2-oxopropyl)-dGTP + H2O = lactate + dGTP + H(+). The catalysed reaction is N(2)-(1-hydroxy-2-oxopropyl)-GTP + H2O = lactate + GTP + H(+). It catalyses the reaction N(2)-(1-hydroxy-2-oxopropyl)-GDP + H2O = lactate + GDP + H(+). The enzyme catalyses N(2)-(1-hydroxy-2-oxopropyl)-GMP + H2O = lactate + GMP + H(+). It carries out the reaction N(2)-(1-hydroxy-2-oxoethyl)-dGTP + H2O = dGTP + glycolate + H(+). The catalysed reaction is N(2)-(1-hydroxy-2-oxoethyl)-GTP + H2O = glycolate + GTP + H(+). It catalyses the reaction N(2)-(1-hydroxy-2-oxoethyl)-GDP + H2O = glycolate + GDP + H(+). The enzyme catalyses N(2)-(1-hydroxy-2-oxoethyl)-GMP + H2O = glycolate + GMP + H(+). It carries out the reaction an N(2)-(1-hydroxy-2-oxopropyl)-guanosine in RNA + H2O = a guanosine in RNA + lactate + H(+). The catalysed reaction is an N(2)-(1-hydroxy-2-oxopropyl)-2'-deoxyguanosine in DNA + H2O = a 2'-deoxyguanosine in DNA + lactate + H(+). It catalyses the reaction an N(2)-(1-hydroxy-2-oxoethyl)-guanosine in RNA + H2O = a guanosine in RNA + glycolate + H(+). The enzyme catalyses an N(2)-(1-hydroxy-2-oxoethyl)-2'-deoxyguanosine in DNA + H2O = a 2'-deoxyguanosine in DNA + glycolate + H(+). In terms of biological role, protein and nucleotide deglycase that catalyzes the deglycation of the Maillard adducts formed between amino groups of proteins or nucleotides and reactive carbonyl groups of glyoxals. Thus, functions as a protein deglycase that repairs methylglyoxal- and glyoxal-glycated proteins, and releases repaired proteins and lactate or glycolate, respectively. Deglycates cysteine, arginine and lysine residues in proteins, and thus reactivates these proteins by reversing glycation by glyoxals. Acts on early glycation intermediates (hemithioacetals and aminocarbinols), preventing the formation of Schiff bases and advanced glycation endproducts (AGE). Also functions as a nucleotide deglycase able to repair glycated guanine in the free nucleotide pool (GTP, GDP, GMP, dGTP) and in DNA and RNA. Is thus involved in a major nucleotide repair system named guanine glycation repair (GG repair), dedicated to reversing methylglyoxal and glyoxal damage via nucleotide sanitization and direct nucleic acid repair. Plays an important role in protecting cells from carbonyl stress. This chain is Protein/nucleic acid deglycase HchA, found in Escherichia coli O81 (strain ED1a).